The primary structure comprises 277 residues: Lectin 1 (277 aa).

The first 30 residues, 1-30, serve as a signal peptide directing secretion; sequence MSFSSSNFYVILSISLTVFILLFNINKVNS. Asn-143 carries N-linked (GlcNAc...) asparagine glycosylation. 2 residues coordinate Mn(2+): Glu-152 and Asp-154. Ca(2+) is bound by residues Asp-154, Asn-158, and Asp-161. Mn(2+)-binding residues include Asp-161 and His-167. Asn-269 is a glycosylation site (N-linked (GlcNAc...) asparagine).

This sequence belongs to the leguminous lectin family.

Functionally, lectin that may be involved in a cell recognition process. The protein is Lectin 1 (LEC1) of Medicago truncatula (Barrel medic).